A 156-amino-acid polypeptide reads, in one-letter code: Succinate dehydrogenase assembly factor 2-A, mitochondrial (156 aa).

The N-terminal 24 residues, 1–24 (MLRQFLVSTAVRRVVVPSMAQTRC), are a transit peptide targeting the mitochondrion. Residues 35-62 (TPGEIVDYDDPPHIPVPEYPSRPDEPLE) form a disordered region.

Belongs to the SDHAF2 family. As to quaternary structure, interacts with the flavoprotein subunit within the SDH catalytic dimer.

The protein resides in the mitochondrion matrix. In terms of biological role, plays an essential role in the assembly of succinate dehydrogenase (SDH), an enzyme complex (also referred to as respiratory complex II) that is a component of both the tricarboxylic acid (TCA) cycle and the mitochondrial electron transport chain, and which couples the oxidation of succinate to fumarate with the reduction of ubiquinone (coenzyme Q) to ubiquinol. Required for flavinylation (covalent attachment of FAD) of the flavoprotein subunit of the SDH catalytic dimer. The protein is Succinate dehydrogenase assembly factor 2-A, mitochondrial of Drosophila ananassae (Fruit fly).